Reading from the N-terminus, the 601-residue chain is Elongation factor 4 (601 aa).

Residues 6–188 (NYIRNFSIVA…AIVTQLPSPR (183 aa)) form the tr-type G domain. GTP-binding positions include 18 to 23 (DHGKST) and 135 to 138 (NKVD).

This sequence belongs to the TRAFAC class translation factor GTPase superfamily. Classic translation factor GTPase family. LepA subfamily.

It localises to the cell inner membrane. The catalysed reaction is GTP + H2O = GDP + phosphate + H(+). Its function is as follows. Required for accurate and efficient protein synthesis under certain stress conditions. May act as a fidelity factor of the translation reaction, by catalyzing a one-codon backward translocation of tRNAs on improperly translocated ribosomes. Back-translocation proceeds from a post-translocation (POST) complex to a pre-translocation (PRE) complex, thus giving elongation factor G a second chance to translocate the tRNAs correctly. Binds to ribosomes in a GTP-dependent manner. This Bartonella henselae (strain ATCC 49882 / DSM 28221 / CCUG 30454 / Houston 1) (Rochalimaea henselae) protein is Elongation factor 4.